Here is a 172-residue protein sequence, read N- to C-terminus: Small integral membrane protein 23 (172 aa).

Over 1–36 (MATQQVDSRRQVAAEQVAAQLLERRRGSHCDDEKQT) the chain is Cytoplasmic. The helical; Signal-anchor for type II membrane protein transmembrane segment at 37-53 (LLALLILVLYLSTEIWG) threads the bilayer. Residues 54 to 172 (SSWEVSERIR…LEISLSGAEL (119 aa)) lie on the Extracellular side of the membrane. Positions 96–128 (LKEKLHVFSEKLEEEVQQLEQLAWDLELWLDAL) form a coiled coil.

It is found in the cell membrane. The protein is Small integral membrane protein 23 (SMIM23) of Homo sapiens (Human).